Here is a 211-residue protein sequence, read N- to C-terminus: ATP phosphoribosyltransferase (211 aa).

It belongs to the ATP phosphoribosyltransferase family. Short subfamily. In terms of assembly, heteromultimer composed of HisG and HisZ subunits.

The protein resides in the cytoplasm. It catalyses the reaction 1-(5-phospho-beta-D-ribosyl)-ATP + diphosphate = 5-phospho-alpha-D-ribose 1-diphosphate + ATP. Its pathway is amino-acid biosynthesis; L-histidine biosynthesis; L-histidine from 5-phospho-alpha-D-ribose 1-diphosphate: step 1/9. Catalyzes the condensation of ATP and 5-phosphoribose 1-diphosphate to form N'-(5'-phosphoribosyl)-ATP (PR-ATP). Has a crucial role in the pathway because the rate of histidine biosynthesis seems to be controlled primarily by regulation of HisG enzymatic activity. In Pseudomonas savastanoi pv. phaseolicola (strain 1448A / Race 6) (Pseudomonas syringae pv. phaseolicola (strain 1448A / Race 6)), this protein is ATP phosphoribosyltransferase.